We begin with the raw amino-acid sequence, 1774 residues long: Kinesin-like protein KIF20B (1774 aa).

A Kinesin motor domain is found at 58–477; it reads YLQVCLRIRP…LKFSTTAQRV (420 aa). ATP is bound at residue 152-159; it reads GLTNSGKT. Phosphoserine is present on serine 486. Coiled coils occupy residues 525–601 and 705–747; these read EDVL…KIRE and QEAI…LVQA. Residues 538 to 555 show a composition bias toward acidic residues; sequence EENEETQNMETELTDEDS. Disordered regions lie at residues 538 to 557 and 740 to 799; these read EENE…DSDK and ESNS…PPAK. Over residues 741-778 the composition is skewed to polar residues; sequence SNSLVQALKTSSKVDTSLTSNKSTCNETSEMPKNSRAQ. Basic and acidic residues predominate over residues 779–788; sequence THSERKRLNE. Residues 824–946 adopt a coiled-coil conformation; sequence SEVVEGNRVL…QMQTKIDELR (123 aa). Serine 950 is subject to Phosphoserine. The segment at 1002–1059 is necessary and sufficient for interaction with SHTN1; sequence ENSFHASIEAIWEECKEIVKASSKKSHQIQGLEEQIEKLQVEVKGYREENSDLRAQES. Positions 1021 to 1507 form a coiled coil; the sequence is KASSKKSHQI…DEEIQELRKA (487 aa). Residues serine 1107 and serine 1542 each carry the phosphoserine modification. The tract at residues 1514–1774 is interaction with PIN1; it reads TENQTMNPKP…KRRLRTRTAK (261 aa). A Phosphothreonine; by CDK1 modification is found at threonine 1598. Position 1612 is a phosphoserine (serine 1612). The segment at 1625-1663 is disordered; that stretch reads KKNSTPRSNVKFPVSEHRNSPVKKEQKVSVGPSSKKTYS. Over residues 1638–1651 the composition is skewed to basic and acidic residues; the sequence is VSEHRNSPVKKEQK. Residues serine 1669 and serine 1694 each carry the phosphoserine modification.

This sequence belongs to the TRAFAC class myosin-kinesin ATPase superfamily. Kinesin family. In terms of assembly, oligomerizes (via kinesin motor domain). Associates with microtubules. Interacts (via C-terminal globular tail region) with PIN1 (via WW domain). Interacts with PRC1. Interacts with SHTN1 (via N-terminus); the interaction is direct and promotes the association of SHTN1 to microtubules in primary neurons. Associates with microtubules. Phosphorylated during mitosis by CDK1. As to expression, expressed in the brain (at protein level).

The protein resides in the nucleus. It localises to the cytoplasm. Its subcellular location is the cytoskeleton. The protein localises to the microtubule organizing center. It is found in the centrosome. The protein resides in the nucleolus. It localises to the nucleoplasm. Its subcellular location is the spindle. The protein localises to the spindle pole. It is found in the midbody. The protein resides in the cell projection. It localises to the axon. Its subcellular location is the growth cone. Functionally, plus-end-directed motor enzyme that is required for completion of cytokinesis. Required for proper midbody organization and abscission in polarized cortical stem cells. Plays a role in the regulation of neuronal polarization by mediating the transport of specific cargos. Participates in the mobilization of SHTN1 and in the accumulation of PIP3 in the growth cone of primary hippocampal neurons in a tubulin and actin-dependent manner. In the developing telencephalon, cooperates with SHTN1 to promote both the transition from the multipolar to the bipolar stage and the radial migration of cortical neurons from the ventricular zone toward the superficial layer of the neocortex. Involved in cerebral cortex growth. Acts as an oncogene for promoting bladder cancer cells proliferation, apoptosis inhibition and carcinogenic progression. This Mus musculus (Mouse) protein is Kinesin-like protein KIF20B.